We begin with the raw amino-acid sequence, 770 residues long: Amyloid-beta precursor protein (770 aa).

Positions 1–17 (MLPGLALLLLAAWTARA) are cleaved as a signal peptide. Residues 18–701 (LEVPTDGNAG…AEDVGSNKGA (684 aa)) lie on the Extracellular side of the membrane. Positions 28-123 (LLAEPQIAMF…PYRCLVGEFV (96 aa)) are GFLD subdomain. Residues 28–189 (LLAEPQIAMF…RGVEFVCCPL (162 aa)) form the E1 domain. 6 cysteine pairs are disulfide-bonded: Cys-38–Cys-62, Cys-73–Cys-117, Cys-98–Cys-105, Cys-133–Cys-187, Cys-144–Cys-174, and Cys-158–Cys-186. 96 to 110 (NWCKRGRKQCKTHPH) contributes to the heparin binding site. The segment at 131 to 189 (DKCKFLHQERMDVCETHLHWHTVAKETCSEKSTNLHDYGMLLPCGIDKFRGVEFVCCPL) is cuBD subdomain. Residues His-147, His-151, and Tyr-168 each coordinate Cu(2+). The interval 181–188 (GVEFVCCP) is zinc-binding. Glu-183, Cys-186, and Cys-187 together coordinate Zn(2+). The span at 194–207 (DNVDSADAEEDDSD) shows a compositional bias: acidic residues. Positions 194 to 284 (DNVDSADAEE…TTTTTTESVE (91 aa)) are disordered. Position 198 is a phosphoserine; by CK2 (Ser-198). Ser-206 carries the post-translational modification Phosphoserine; by CK1. Residues Tyr-217 and Tyr-262 each carry the sulfotyrosine modification. A compositionally biased stretch (acidic residues) spans 228–264 (VAEEEEVAEVEEEEADDDEDDEDGDEVEEEAEEPYEE). Low complexity predominate over residues 268–281 (RTTSIATTTTTTTE). 3 disulfide bridges follow: Cys-291–Cys-341, Cys-300–Cys-324, and Cys-316–Cys-337. Residues 291-341 (CSEQAETGPCRAMISRWYFDVTEGKCAPFFYGGCGGNRNNFDTEEYCMAVC) form the BPTI/Kunitz inhibitor domain. Tyr-336 carries the post-translational modification Sulfotyrosine. An OX-2 motif is present at residues 344–365 (VMSQSLLKTTQEPLARDPVKLP). An E2 domain is found at 374 to 565 (AVDKYLETPG…EEIQDEVDEL (192 aa)). Residues 391-423 (FQKAKERLEAKHRERMSQVMREWEEAERQAKNL) form a heparin-binding region. Residue Ser-441 is modified to Phosphoserine. The segment at 491–522 (FNMLKKYVRAEQKDRQHTLKHFEHVRMVDPKK) is heparin-binding. The residue at position 497 (Tyr-497) is a Phosphotyrosine. The tract at residues 523–540 (AAQIRSQVMTHLRVIYER) is collagen-binding. 2 N-linked (GlcNAc...) asparagine glycosylation sites follow: Asn-542 and Asn-571. The Cu(2+) site is built by His-677, Tyr-681, His-684, and His-685. Residues His-677, Tyr-681, His-684, and His-685 each contribute to the Zn(2+) site. Residues 695-722 (VGSNKGAIIGLMVGGVVIATVIVITLVM) form an interaction with PSEN1 region. The chain crosses the membrane as a helical span at residues 702-722 (IIGLMVGGVVIATVIVITLVM). The Cytoplasmic segment spans residues 723 to 770 (LKKKQYTSIHHGVVEVDAAVTPEERHLSKMQQNGYENPTYKFFEQMQN). A Basolateral sorting signal motif is present at residues 724–734 (KKKQYTSIHHG). Thr-729 carries the post-translational modification Phosphothreonine. Ser-730 bears the Phosphoserine; by APP-kinase I mark. The tract at residues 732 to 751 (HHGVVEVDAAVTPEERHLSK) is interaction with G(o)-alpha. Thr-743 is modified (phosphothreonine; by CDK5 and MAPK10). The interval 756–770 (GYENPTYKFFEQMQN) is required for the interaction with KIF5B and for anterograde transport in axons. Tyr-757 is subject to Phosphotyrosine; by ABL1. Positions 757–762 (YENPTY) match the YENPXY motif; contains endocytosis signal motif. Residue Lys-763 forms a Glycyl lysine isopeptide (Lys-Gly) (interchain with G-Cter in ubiquitin) linkage.

This sequence belongs to the APP family. In terms of assembly, binds, via its C-terminus, to the PID domain of several cytoplasmic proteins, including APBB family members, the APBA family, MAPK8IP1, SHC1 and NUMB and DAB1. Binding to DAB1 inhibits its serine phosphorylation. Interacts (via NPXY motif) with DAB2 (via PID domain); the interaction is impaired by tyrosine phosphorylation of the NPXY motif. Also interacts with GPCR-like protein BPP, APPBP1, IB1, KNS2 (via its TPR domains), APPBP2 (via BaSS) and DDB1. In vitro, it binds MAPT via the MT-binding domains. Associates with microtubules in the presence of ATP and in a kinesin-dependent manner. Interacts, through a C-terminal domain, with GNAO1. Amyloid-beta protein 42 binds CHRNA7 in hippocampal neurons. Amyloid-beta associates with HADH2. Interacts with CPEB1, ANKS1B and AGER. Interacts with ITM2B. Interacts with ITM2C. Interacts with IDE. Can form homodimers; dimerization is enhanced in the presence of Cu(2+) ions. Can form homodimers; this is promoted by heparin binding. Amyloid-beta protein 40 interacts with S100A9. CTF-alpha product of APP interacts with GSAP. Interacts with SORL1 (via N-terminal ectodomain); this interaction retains APP in the trans-Golgi network and reduces processing into soluble APP-alpha and amyloid-beta peptides. The C99 fragment also interacts with SORL1. Interacts with PLD3. Interacts with VDAC1. Interacts with NSG1; could regulate APP processing. Amyloid-beta protein 42 interacts with FPR2. Interacts (via transmembrane region) with PSEN1; the interaction is direct. Interacts with LRRK2. Interacts (via cytoplasmic domain) with KIF5B. Interacts (via C-terminus) with APBB2/FE65L1 (via C-terminus). Interacts (via intracellular domain) with APBB3. Proteolytically processed under normal cellular conditions. Cleavage either by alpha-secretase, beta-secretase or theta-secretase leads to generation and extracellular release of soluble APP peptides, S-APP-alpha and S-APP-beta, and the retention of corresponding membrane-anchored C-terminal fragments, C80, C83 and C99. Subsequent processing of C80 and C83 by gamma-secretase yields P3 peptides. This is the major secretory pathway and is non-amyloidogenic. Alternatively, presenilin/nicastrin-mediated gamma-secretase processing of C99 releases the amyloid-beta proteins, amyloid-beta protein 40 and amyloid-beta protein 42, major components of amyloid plaques, and the cytotoxic C-terminal fragments, gamma-CTF(50), gamma-CTF(57) and gamma-CTF(59). PSEN1 cleavage is more efficient with C83 than with C99 as substrate (in vitro). Amyloid-beta protein 40 and Amyloid-beta protein 42 are cleaved by ACE. Many other minor amyloid-beta peptides, amyloid-beta 1-X peptides, are found in cerebral spinal fluid (CSF) including the amyloid-beta X-15 peptides, produced from the cleavage by alpha-secretase. Post-translationally, proteolytically cleaved by caspases during neuronal apoptosis. Cleavage at Asp-739 by either caspase-3, -8 or -9 results in the production of the neurotoxic C31 peptide and the increased production of amyloid-beta peptides. In terms of processing, N- and O-glycosylated. Phosphorylation in the C-terminal on tyrosine, threonine and serine residues is neuron-specific. Phosphorylation can affect APP processing, neuronal differentiation and interaction with other proteins. Phosphorylated on Thr-743 in neuronal cells by Cdc5 kinase and Mapk10, in dividing cells by Cdc2 kinase in a cell-cycle dependent manner with maximal levels at the G2/M phase and, in vitro, by GSK-3-beta. The Thr-743 phosphorylated form causes a conformational change which reduces binding of Fe65 family members. In dopaminergic (DA) neurons, phosphorylation on Thr-743 by LRKK2 promotes the production and the nuclear translocation of the APP intracellular domain (AICD) which induces DA neuron apoptosis. Phosphorylation on Tyr-757 is required for SHC binding. Phosphorylated in the extracellular domain by casein kinases on both soluble and membrane-bound APP. This phosphorylation is inhibited by heparin. Post-translationally, trophic-factor deprivation triggers the cleavage of surface APP by beta-secretase to release sAPP-beta which is further cleaved to release an N-terminal fragment of APP (N-APP). In terms of processing, amyloid-beta peptides are degraded by IDE. Sulfated on tyrosine residues.

The protein localises to the cell membrane. It is found in the membrane. It localises to the perikaryon. The protein resides in the cell projection. Its subcellular location is the growth cone. The protein localises to the clathrin-coated pit. It is found in the early endosome. It localises to the cytoplasmic vesicle. The protein resides in the endoplasmic reticulum. Its subcellular location is the golgi apparatus. The protein localises to the secreted. It is found in the cell surface. It localises to the nucleus. The protein resides in the cytoplasm. Functionally, functions as a cell surface receptor and performs physiological functions on the surface of neurons relevant to neurite growth, neuronal adhesion and axonogenesis. Interaction between APP molecules on neighboring cells promotes synaptogenesis. Involved in cell mobility and transcription regulation through protein-protein interactions. Can promote transcription activation through binding to APBB1-KAT5 and inhibit Notch signaling through interaction with Numb. Couples to apoptosis-inducing pathways such as those mediated by G(o) and JIP. Inhibits G(o)-alpha ATPase activity. Acts as a kinesin I membrane receptor, mediating the axonal transport of beta-secretase and presenilin 1. By acting as a kinesin I membrane receptor, plays a role in axonal anterograde transport of cargo towards synapses in axons. May be involved in copper homeostasis/oxidative stress through copper ion reduction. In vitro, copper-metallated APP induces neuronal death directly or is potentiated through Cu(2+)-mediated low-density lipoprotein oxidation. Can regulate neurite outgrowth through binding to components of the extracellular matrix such as heparin and collagen I and IV. Induces a AGER-dependent pathway that involves activation of p38 MAPK, resulting in internalization of amyloid-beta peptide and mitochondrial dysfunction in cultured cortical neurons. Provides Cu(2+) ions for GPC1 which are required for release of nitric oxide (NO) and subsequent degradation of the heparan sulfate chains on GPC1. Amyloid-beta peptides are lipophilic metal chelators with metal-reducing activity. Binds transient metals such as copper, zinc and iron. In terms of biological role, the gamma-CTF peptides as well as the caspase-cleaved peptides, including C31, are potent enhancers of neuronal apoptosis. The polypeptide is Amyloid-beta precursor protein (Pan troglodytes (Chimpanzee)).